The chain runs to 548 residues: Membrane protein insertase YidC (548 aa).

Residues Asn-6–Asp-26 traverse the membrane as a helical segment. Residues Asn-28–Ser-55 are disordered. Residues Gln-30 to Gln-50 show a composition bias toward low complexity. The next 4 helical transmembrane spans lie at Phe-350–Tyr-370, Leu-420–Leu-440, Leu-458–Ile-478, and Pro-499–Val-519.

The protein belongs to the OXA1/ALB3/YidC family. Type 1 subfamily. Interacts with the Sec translocase complex via SecD. Specifically interacts with transmembrane segments of nascent integral membrane proteins during membrane integration.

The protein localises to the cell inner membrane. Required for the insertion and/or proper folding and/or complex formation of integral membrane proteins into the membrane. Involved in integration of membrane proteins that insert both dependently and independently of the Sec translocase complex, as well as at least some lipoproteins. Aids folding of multispanning membrane proteins. In Escherichia coli (strain K12 / MC4100 / BW2952), this protein is Membrane protein insertase YidC.